A 291-amino-acid polypeptide reads, in one-letter code: ATP synthase gamma chain (291 aa).

Belongs to the ATPase gamma chain family. In terms of assembly, F-type ATPases have 2 components, CF(1) - the catalytic core - and CF(0) - the membrane proton channel. CF(1) has five subunits: alpha(3), beta(3), gamma(1), delta(1), epsilon(1). CF(0) has three main subunits: a, b and c.

It localises to the cell inner membrane. Its function is as follows. Produces ATP from ADP in the presence of a proton gradient across the membrane. The gamma chain is believed to be important in regulating ATPase activity and the flow of protons through the CF(0) complex. The polypeptide is ATP synthase gamma chain (Cupriavidus pinatubonensis (strain JMP 134 / LMG 1197) (Cupriavidus necator (strain JMP 134))).